The primary structure comprises 1923 residues: Nuclear pore complex protein GP210 (1923 aa).

An N-terminal signal peptide occupies residues 1-22 (MVPVSFCFFFLLLLLSAGESSS). N-linked (GlcNAc...) asparagine glycosylation is found at N73, N117, N289, N609, N863, N903, N967, N982, N1171, N1199, N1550, N1568, and N1743. Residues 1152 to 1205 (IFLVPGASYVLTIEGGPTMNVSVDYTTVDNEVAKIEKSGRLYATSPGNTTIYAT) enclose the BIG2 domain. The chain crosses the membrane as a helical span at residues 1829–1849 (SVLLKILWGVLVLVVSVIILM).

The protein belongs to the NUP210 family. As to quaternary structure, part of the nuclear pore complex (NPC). The NPC has an eight-fold symmetrical structure comprising a central transport channel and two rings, the cytoplasmic and nuclear rings, to which eight filaments are attached. The cytoplasmic filaments have loose ends, while the nuclear filaments are joined in a distal ring, forming a nuclear basket. NPCs are highly dynamic in configuration and composition, and can be devided in 3 subcomplexes, the NUP62 subcomplex, the NUP107-160 subcomplex and the NUP93 subcomplex, containing approximately 30 different nucleoporin proteins.

The protein localises to the nucleus envelope. It localises to the nucleus membrane. It is found in the nucleus. The protein resides in the nuclear pore complex. The polypeptide is Nuclear pore complex protein GP210 (Arabidopsis thaliana (Mouse-ear cress)).